Here is a 137-residue protein sequence, read N- to C-terminus: Prostate and testis expressed protein 13 (137 aa).

Positions 1–20 (MFQKLLLSVFIILLMDVGER) are cleaved as a signal peptide. One can recognise a UPAR/Ly6 domain in the interval 28–114 (RHCNLCSHYD…CIDRNYCNDG (87 aa)). 5 disulfide bridges follow: Cys-30-Cys-60, Cys-33-Cys-41, Cys-48-Cys-84, Cys-87-Cys-104, and Cys-105-Cys-111. N-linked (GlcNAc...) asparagine glycosylation is present at Asn-57.

The protein belongs to the PATE family. As to expression, strongly expressed in the epididymis, including the initial segment, caput, corpus and cauda regions. Weakly expressed in prostate.

The protein localises to the secreted. The protein is Prostate and testis expressed protein 13 of Mus musculus (Mouse).